The chain runs to 205 residues: Glycerol-3-phosphate acyltransferase 1 (205 aa).

5 helical membrane-spanning segments follow: residues 7–27 (TLIGYVFGNFLTAMIVGKLFL), 52–74 (WGILTCLGDLLKSLIALFIVYFV), 78–100 (HINIAYAGLGLILGHCFPIWNHF), 125–145 (LLIALILTAIMQNLTIPPLVF), and 160–180 (AGIVFMVITLIMVYKFWQDII).

This sequence belongs to the PlsY family. In terms of assembly, probably interacts with PlsX.

Its subcellular location is the cell membrane. It carries out the reaction an acyl phosphate + sn-glycerol 3-phosphate = a 1-acyl-sn-glycero-3-phosphate + phosphate. The protein operates within lipid metabolism; phospholipid metabolism. Catalyzes the transfer of an acyl group from acyl-phosphate (acyl-PO(4)) to glycerol-3-phosphate (G3P) to form lysophosphatidic acid (LPA). This enzyme utilizes acyl-phosphate as fatty acyl donor, but not acyl-CoA or acyl-ACP. This chain is Glycerol-3-phosphate acyltransferase 1, found in Lactobacillus acidophilus (strain ATCC 700396 / NCK56 / N2 / NCFM).